The sequence spans 70 residues: Small ribosomal subunit protein bS21A (70 aa).

It belongs to the bacterial ribosomal protein bS21 family.

The protein is Small ribosomal subunit protein bS21A of Paraburkholderia xenovorans (strain LB400).